The following is a 234-amino-acid chain: 2,3-bisphosphoglycerate-dependent phosphoglycerate mutase (234 aa).

Residues 8-15, 21-22, Arg-60, 87-90, Lys-98, 114-115, and 183-184 each bind substrate; these read RHGESVWN, TG, ERHY, RR, and GN. The Tele-phosphohistidine intermediate role is filled by His-9. The active-site Proton donor/acceptor is Glu-87.

It belongs to the phosphoglycerate mutase family. BPG-dependent PGAM subfamily. Homodimer.

The catalysed reaction is (2R)-2-phosphoglycerate = (2R)-3-phosphoglycerate. Its pathway is carbohydrate degradation; glycolysis; pyruvate from D-glyceraldehyde 3-phosphate: step 3/5. Its function is as follows. Catalyzes the interconversion of 2-phosphoglycerate and 3-phosphoglycerate. This chain is 2,3-bisphosphoglycerate-dependent phosphoglycerate mutase, found in Geobacter sp. (strain M21).